The primary structure comprises 78 residues: Delta-conotoxin TxVIA (78 aa).

Positions 1–22 (MKLTCMMIVAVLFLTAWTFATA) are cleaved as a signal peptide. Positions 23–49 (DDPRNGLGNLFSNAHHEMKNPEASKLN) are excised as a propeptide. Cystine bridges form between Cys-53-Cys-68, Cys-60-Cys-72, and Cys-67-Cys-77. Residue Met-59 is modified to Methionine sulfoxide; partial.

This sequence belongs to the conotoxin O1 superfamily. As to expression, expressed by the venom duct.

The protein resides in the secreted. In terms of biological role, delta-conotoxins bind to site 6 of voltage-gated sodium channels (Nav) and inhibit the inactivation process. Binding of this toxin is strongly calcium-dependent but not voltage-dependent. The binding site is most likely on the extracellular side of the sodium channel. Binds receptor sites on both mollusk and rat central nervous system, but despite its high affinity binding to rat sodium channel, it has no functional effect in vivo and in vitro on it. Also has no effect on Gambusia fish. Is important in mollusk for the paralysis of the prey. Upon injection of the peptide, a subordinate lobster assumes an exaggerated dominant posture (of a 'King-Kong' lobster!). This is Delta-conotoxin TxVIA from Conus textile (Cloth-of-gold cone).